A 535-amino-acid chain; its full sequence is Large neutral amino acids transporter small subunit 2 (535 aa).

Residues 1-10 are compositionally biased toward basic residues; it reads MEKGARHRHN. A disordered region spans residues 1 to 30; sequence MEKGARHRHNTDKNHAGGSESEDFPEASSG. The Cytoplasmic segment spans residues 1 to 44; it reads MEKGARHRHNTDKNHAGGSESEDFPEASSGGGGVALKKEIGLVS. Serine 19, serine 28, and serine 29 each carry phosphoserine. A helical membrane pass occupies residues 45–65; sequence ACGIIVGNIIGSGIFVSPKGV. Isoleucine 53 is a binding site for L-leucine. The Extracellular segment spans residues 66–73; that stretch reads LENAGSVG. A helical transmembrane segment spans residues 74–95; the sequence is LAVIVWIVTGLITAVGALCYAE. Residues 96–116 lie on the Cytoplasmic side of the membrane; the sequence is LGVTIPKSGGDYSYVKDIFGG. The helical transmembrane segment at 117–149 threads the bilayer; it reads LAGFLRLWIAVLVIYPTNQAVIALTFSNYVLQP. Asparagine 134 contacts L-tryptophan. Over 150–157 the chain is Extracellular; that stretch reads LFPTCFPP. A helical membrane pass occupies residues 158–178; that stretch reads DSGLRLLAAICLLLLTWVNCS. Over 179 to 181 the chain is Cytoplasmic; it reads SVR. A helical membrane pass occupies residues 182 to 210; the sequence is WATRVQDIFTAGKLLALALIIIMGVVQIC. Over 211–230 the chain is Extracellular; that stretch reads KGEYFWLEPKNAFDNFQEPD. A helical membrane pass occupies residues 231–252; the sequence is IGLIALAFLQGSFAYGGWNFLN. Glycine 246 is a binding site for L-leucine. Over 253-265 the chain is Cytoplasmic; sequence YVTEELVDPYKNL. The chain crosses the membrane as a helical span at residues 266-287; that stretch reads PRAIFISIPLVTFVYVFANVAY. Residues 288 to 312 are Extracellular-facing; that stretch reads ITAMSPQELLASNAVAVTFGEKLLG. A helical membrane pass occupies residues 313–338; it reads VMAWIMPISVALSTFGGVNGSLFTSS. Topologically, residues 339-364 are cytoplasmic; it reads RLFFAGAREGHLPSVLAMIHVKRCTP. Residues 365–382 form a helical membrane-spanning segment; that stretch reads IPALLFTCLSTLLMLVTS. Over 383–386 the chain is Extracellular; that stretch reads DMYT. The chain crosses the membrane as a helical span at residues 387–408; the sequence is LINYVGFINYLFYGVTVAGQIV. Asparagine 395 provides a ligand contact to L-tryptophan. Topologically, residues 409–423 are cytoplasmic; the sequence is LRWKKPDIPRPIKIN. The next 2 helical transmembrane spans lie at 424-446 and 447-466; these read LLFP…WSEP and VVCG…YFLG. Residues 467-535 are Cytoplasmic-facing; it reads VYWQHKPKCF…DKDSLEQSQP (69 aa). The segment at 500 to 535 is disordered; the sequence is GGSGTEGTREDMEEQQQPICQPSPGKDKDSLEQSQP. Residues 524 to 535 are compositionally biased toward basic and acidic residues; it reads GKDKDSLEQSQP. Serine 529 is modified (phosphoserine).

It belongs to the amino acid-polyamine-organocation (APC) superfamily. L-type amino acid transporter (LAT) (TC 2.A.3.8) family. Disulfide-linked heterodimer composed of the catalytic light chain subunit SLC7A8 and the heavy chain subunit SLC3A2. SLC3A2 acts as a chaperone for correct plasma membrane trafficking and stabilization of SLC7A8 and modulates the substrate affinity and specificity of SLC7A8. ICAM-1 associates with the heterodimer SLC3A2/SLC7A8; facilitates leucine uptake. As to expression, mainly expressed in kidney and small intestine.

The protein resides in the cell membrane. It is found in the basolateral cell membrane. It carries out the reaction L-histidine(in) + L-phenylalanine(out) = L-histidine(out) + L-phenylalanine(in). The catalysed reaction is L-tryptophan(in) + L-phenylalanine(out) = L-tryptophan(out) + L-phenylalanine(in). The enzyme catalyses L-isoleucine(in) + L-phenylalanine(out) = L-isoleucine(out) + L-phenylalanine(in). It catalyses the reaction L-valine(in) + L-phenylalanine(out) = L-valine(out) + L-phenylalanine(in). It carries out the reaction L-leucine(in) + L-phenylalanine(out) = L-leucine(out) + L-phenylalanine(in). The catalysed reaction is L-glutamine(in) + L-phenylalanine(out) = L-glutamine(out) + L-phenylalanine(in). The enzyme catalyses L-cysteine(in) + L-phenylalanine(out) = L-cysteine(out) + L-phenylalanine(in). It catalyses the reaction L-phenylalanine(out) + L-methionine(in) = L-phenylalanine(in) + L-methionine(out). It carries out the reaction L-leucine(out) + L-methionine(in) = L-leucine(in) + L-methionine(out). The catalysed reaction is L-cysteine(out) + L-methionine(in) = L-cysteine(in) + L-methionine(out). The enzyme catalyses S-methylmercury-L-cysteine(out) + L-methionine(in) = S-methylmercury-L-cysteine(in) + L-methionine(out). It catalyses the reaction S-methylmercury-L-cysteine(in) + L-leucine(out) = S-methylmercury-L-cysteine(out) + L-leucine(in). It carries out the reaction S-methylmercury-L-cysteine(in) + L-phenylalanine(out) = S-methylmercury-L-cysteine(out) + L-phenylalanine(in). The catalysed reaction is L-phenylalanine(out) + L-serine(in) = L-phenylalanine(in) + L-serine(out). The enzyme catalyses L-phenylalanine(out) + glycine(in) = L-phenylalanine(in) + glycine(out). It catalyses the reaction L-phenylalanine(out) + L-alanine(in) = L-phenylalanine(in) + L-alanine(out). It carries out the reaction 3,3',5-triiodo-L-thyronine(out) = 3,3',5-triiodo-L-thyronine(in). The catalysed reaction is 3,3'-diiodo-L-thyronine(out) = 3,3'-diiodo-L-thyronine(in). The enzyme catalyses L-dopa(out) + L-phenylalanine(in) = L-dopa(in) + L-phenylalanine(out). With respect to regulation, the transporter activity is inhibited by 2-aminobicyclo-(2,2,1)heptane-2-carboxylic acid (BCH) (a specific inhibitor of system L transport). Functionally, associates with SLC3A2 to form a functional heterodimeric complex that translocates small and large neutral amino acids with broad specificity and a stoichiometry of 1:1. Functions as amino acid antiporter mediating the influx of extracellular essential amino acids mainly in exchange with the efflux of highly concentrated intracellular amino acids. Has relatively symmetrical selectivities but strongly asymmetrical substrate affinities at both the intracellular and extracellular sides of the transporter. This asymmetry allows SLC7A8 to regulate intracellular amino acid pools (mM concentrations) by exchange with external amino acids (uM concentration range), equilibrating the relative concentrations of different amino acids across the plasma membrane instead of mediating their net uptake. May play an essential role in the reabsorption of neutral amino acids from the epithelial cells to the bloodstream in the kidney. Involved in the uptake of methylmercury (MeHg) when administered as the L-cysteine or D,L-homocysteine complexes, and hence plays a role in metal ion homeostasis and toxicity. Involved in the cellular activity of small molecular weight nitrosothiols, via the stereoselective transport of L-nitrosocysteine (L-CNSO) across the transmembrane. Imports the thyroid hormone diiodothyronine (T2) and to a smaller extent triiodothyronine (T3) but not rT 3 or thyroxine (T4). Mediates the uptake of L-DOPA. May participate in auditory function. The protein is Large neutral amino acids transporter small subunit 2 of Oryctolagus cuniculus (Rabbit).